A 710-amino-acid chain; its full sequence is multidrug resistance regulator 2 (710 aa).

A DNA-binding region (zn(2)-C6 fungal-type) is located at residues 11 to 37 (CDACRSRKIKCNRQTPCASCHKSKRDC). 2 helical membrane passes run 475–495 (DLVI…LYLF) and 525–545 (LFLA…TNFL).

The protein resides in the nucleus. It is found in the membrane. In terms of biological role, transcription factor that controls the expression of CDR1, the major multidrug efflux pump. Required for yeast cell adherence to silicone substrate and plays a role in virulence. This Candida albicans (strain SC5314 / ATCC MYA-2876) (Yeast) protein is multidrug resistance regulator 2.